An 809-amino-acid chain; its full sequence is Acyl-homoserine lactone acylase QuiP (809 aa).

Residues 1–26 (MASPAFSHFLPRFGVAAAVASALSLA) form the signal peptide. The active-site Nucleophile is the S261.

This sequence belongs to the peptidase S45 family. As to quaternary structure, heterodimer of an alpha subunit and a beta subunit processed from the same precursor.

The protein localises to the periplasm. The enzyme catalyses an N-acyl-L-homoserine lactone + H2O = L-homoserine lactone + a carboxylate. Catalyzes the deacylation of acyl-homoserine lactone (AHL or acyl-HSL), releasing homoserine lactone (HSL) and the corresponding fatty acid. Possesses a specificity for the degradation of long-chain acyl-HSLs (side chains of seven or more carbons in length). The polypeptide is Acyl-homoserine lactone acylase QuiP (quiP) (Pseudomonas fluorescens (strain ATCC BAA-477 / NRRL B-23932 / Pf-5)).